Reading from the N-terminus, the 535-residue chain is Probable inorganic phosphate transporter 1-7 (535 aa).

Residues 1–24 (MAGDQLNVLNALDVAKTQWYHFTA) are Cytoplasmic-facing. Residues 25-45 (IIIAGMGFFTDAYDLFCISLV) form a helical membrane-spanning segment. Topologically, residues 46–70 (TKLLGRIYYHVDGSEKPGTLPPNVS) are extracellular. Residues 71-91 (AAVNGVAFCGTLAGQLFFGWL) form a helical membrane-spanning segment. At 92–99 (GDKLGRKK) the chain is on the cytoplasmic side. The helical transmembrane segment at 100-120 (VYGMTLMVMVLCSIASGLSFG) threads the bilayer. Residues 121 to 131 (SNPKTVMTTLC) are Extracellular-facing. Residues 132–152 (FFRFWLGFGIGGDYPLSATIM) traverse the membrane as a helical segment. At 153 to 161 (SEYANKKTR) the chain is on the cytoplasmic side. A helical membrane pass occupies residues 162–182 (GAFIAAVFAMQGFGILTGGIF). At 183–211 (AIIVSAAFEAKFPAPTYQIDALASTVPQA) the chain is on the extracellular side. A helical membrane pass occupies residues 212-232 (DYVWRIILMVGALPAAMTYYS). The Cytoplasmic portion of the chain corresponds to 233-289 (RSKMPETARYTALVAKDAKLAASNMSKVLQVEIEAEQQGTEDKSNSFGLFSKEFMKR). A helical membrane pass occupies residues 290–310 (HGLHLLGTTSTWFLLDIAFYS). The Extracellular portion of the chain corresponds to 311 to 345 (QNLFQKDIFSAIGWIPPAQTMNAIQEVFKIARAQT). Residues 346 to 366 (LIALCSTVPGYWFTVAFIDVI) form a helical membrane-spanning segment. At 367-368 (GR) the chain is on the cytoplasmic side. A helical membrane pass occupies residues 369 to 389 (FAIQMMGFFFMTVFMFALAIP). Over 390–399 (YDHWTHKENR) the chain is Extracellular. Residues 400–420 (IGFVAMYSLTFFFANFGPNAT) traverse the membrane as a helical segment. The Cytoplasmic segment spans residues 421–438 (TFVVPAEIFPARFRSTCH). Residues 439–459 (GISAASGKLGAMVGAFGFLYL) traverse the membrane as a helical segment. Topologically, residues 460–480 (AQSPDKTKTEHGYPPGIGVKN) are extracellular. A helical membrane pass occupies residues 481–501 (SLIVLGVVNLLGMVFTLLVPE). The Cytoplasmic segment spans residues 502–535 (SKGKSLEEMSGENEQNDESSSSSNNNSNNAVSTA). A disordered region spans residues 506-535 (SLEEMSGENEQNDESSSSSNNNSNNAVSTA). Positions 519–535 (ESSSSSNNNSNNAVSTA) are enriched in low complexity. At Ser520 the chain carries Phosphoserine.

It belongs to the major facilitator superfamily. Phosphate:H(+) symporter (TC 2.A.1.9) family. In terms of tissue distribution, mature pollen.

Its subcellular location is the membrane. In terms of biological role, high-affinity transporter for external inorganic phosphate. This chain is Probable inorganic phosphate transporter 1-7 (PHT1-7), found in Arabidopsis thaliana (Mouse-ear cress).